We begin with the raw amino-acid sequence, 106 residues long: UPF0213 protein KPN78578_35340 (106 aa).

The GIY-YIG domain occupies 13–88 (VCWFLYLIRT…KQLTKREKER (76 aa)).

This sequence belongs to the UPF0213 family.

The protein is UPF0213 protein KPN78578_35340 of Klebsiella pneumoniae subsp. pneumoniae (strain ATCC 700721 / MGH 78578).